Reading from the N-terminus, the 419-residue chain is UPF0329 protein ECU07_1890/ECU10_0010 (419 aa).

Positions 136–165 are enriched in basic and acidic residues; the sequence is RQRKREEETERSVKELVGDEEKAKSKEEKA. A disordered region spans residues 136-222; the sequence is RQRKREEETE…KGGKKKSKGG (87 aa). Residues 213 to 222 are compositionally biased toward basic residues; the sequence is KGGKKKSKGG.

The protein belongs to the UPF0329 family.

This is UPF0329 protein ECU07_1890/ECU10_0010 from Encephalitozoon cuniculi (strain GB-M1) (Microsporidian parasite).